We begin with the raw amino-acid sequence, 234 residues long: Uracil-DNA glycosylase (234 aa).

D68 functions as the Proton acceptor in the catalytic mechanism.

The protein belongs to the uracil-DNA glycosylase (UDG) superfamily. UNG family.

Its subcellular location is the cytoplasm. The catalysed reaction is Hydrolyzes single-stranded DNA or mismatched double-stranded DNA and polynucleotides, releasing free uracil.. In terms of biological role, excises uracil residues from the DNA which can arise as a result of misincorporation of dUMP residues by DNA polymerase or due to deamination of cytosine. The sequence is that of Uracil-DNA glycosylase from Ruegeria sp. (strain TM1040) (Silicibacter sp.).